We begin with the raw amino-acid sequence, 592 residues long: Multidrug transporter AQR1 (592 aa).

The disordered stretch occupies residues Met-1–Ala-77. A helical membrane pass occupies residues Trp-99–Tyr-119. An N-linked (GlcNAc...) asparagine glycan is attached at Asn-138. 5 consecutive transmembrane segments (helical) span residues Ile-139–Ala-159, Pro-166–Pro-186, Tyr-188–Ile-208, Gly-231–Trp-251, and Ala-255–Leu-275. Asn-285 carries N-linked (GlcNAc...) asparagine glycosylation. 6 helical membrane-spanning segments follow: residues Ile-340–Ala-360, Leu-374–Ala-394, Leu-432–Ser-452, Ile-459–Ala-479, Ser-497–Met-517, and Val-523–Ile-543.

This sequence belongs to the major facilitator superfamily. CAR1 family.

The protein resides in the cell membrane. Multidrug transporter acts as a determinant of resistance to acetic acid, flucytosine and clotrimazole, these 3 compounds acting synergistically against the pathogen. Reduces the intracellular accumulation of the antifungal agents flucytosine and, to a moderate extent, of clotrimazole. Its role in acetic acid resistance may be indirect, presumably through the transport of a still unidentified physiological substrate. The chain is Multidrug transporter AQR1 from Candida glabrata (strain ATCC 2001 / BCRC 20586 / JCM 3761 / NBRC 0622 / NRRL Y-65 / CBS 138) (Yeast).